The primary structure comprises 307 residues: Taste receptor type 2 member 41 (307 aa).

Residues 1–7 are Extracellular-facing; that stretch reads MQAALTA. The chain crosses the membrane as a helical span at residues 8-28; that stretch reads FFMLFFSLLSLLGIAANGFIV. Topologically, residues 29–40 are cytoplasmic; it reads LVLGREWLQYGR. The helical transmembrane segment at 41–61 threads the bilayer; sequence LLPLDMILISLGVSRFCLQLV. The Extracellular portion of the chain corresponds to 62 to 88; the sequence is GTVYNFYYSAHKVEYSGGLSRQFFHLH. A helical transmembrane segment spans residues 89-109; sequence WHFLNLATFXFCSWLSVLFCV. The Cytoplasmic portion of the chain corresponds to 110-129; it reads KXANITHPTFLWLKWRFPGW. Residues 130–150 form a helical membrane-spanning segment; that stretch reads VPWLLLGSVLISFIITLLLFW. Topologically, residues 151-183 are extracellular; sequence VNYPVYQEFLIRKFSGNMTYEWNTRIEMYYLPS. N-linked (GlcNAc...) asparagine glycosylation is present at Asn-167. The chain crosses the membrane as a helical span at residues 184–204; sequence LKLVIWSIPCSVFLVSIMLLI. Residues 205 to 234 are Cytoplasmic-facing; the sequence is NSLRRHTWRMQHNGHSLQDPSTQAHTRAXK. The helical transmembrane segment at 235 to 255 threads the bilayer; it reads SLISFLILYVLSFLSLIIDAT. At 256 to 264 the chain is on the extracellular side; the sequence is KFISMQNDF. Residues 265–285 form a helical membrane-spanning segment; the sequence is YWPWQTAVYLGVSVHPFILIF. Over 286 to 307 the chain is Cytoplasmic; sequence SNLKLRSVFWKLLLLARGFWVA.

The protein belongs to the G-protein coupled receptor T2R family.

The protein resides in the membrane. In terms of biological role, receptor that may play a role in the perception of bitterness and is gustducin-linked. May play a role in sensing the chemical composition of the gastrointestinal content. The activity of this receptor may stimulate alpha gustducin, mediate PLC-beta-2 activation and lead to the gating of TRPM5. This chain is Taste receptor type 2 member 41 (TAS2R41), found in Pongo pygmaeus (Bornean orangutan).